A 550-amino-acid polypeptide reads, in one-letter code: Endonuclease/exonuclease/phosphatase family domain-containing protein 1 (550 aa).

Positions 39–68 (ERLNINTATEEELMTLPGVNRGVAQNIVEY) constitute a HhH domain. The span at 194-213 (STNTNGGFTHPSPTSFSVQS) shows a compositional bias: polar residues. The disordered stretch occupies residues 194-216 (STNTNGGFTHPSPTSFSVQSDEP).

This is Endonuclease/exonuclease/phosphatase family domain-containing protein 1 (eepd1) from Danio rerio (Zebrafish).